Here is a 143-residue protein sequence, read N- to C-terminus: Transcriptional regulator MraZ (143 aa).

SpoVT-AbrB domains are found at residues 5–47 and 76–119; these read THTP…PRAE and TDEQ…DAQA.

This sequence belongs to the MraZ family. As to quaternary structure, forms oligomers.

It is found in the cytoplasm. The protein resides in the nucleoid. The polypeptide is Transcriptional regulator MraZ (Mycobacterium leprae (strain Br4923)).